The sequence spans 408 residues: Histidine--tRNA ligase (408 aa).

This sequence belongs to the class-II aminoacyl-tRNA synthetase family. Homodimer.

It localises to the cytoplasm. It carries out the reaction tRNA(His) + L-histidine + ATP = L-histidyl-tRNA(His) + AMP + diphosphate + H(+). This chain is Histidine--tRNA ligase, found in Campylobacter jejuni subsp. jejuni serotype O:6 (strain 81116 / NCTC 11828).